The following is a 717-amino-acid chain: MVMRPISNKGLIYRHNICLRCNSTLAVSNHEPITQKTRNFLETTTTSTAIFQCNSQISKHARNGNLQEAEAIFRQMSNRSIVSWIAMISAYAENGKMSKAWQVFDEMPVRVTTSYNAMITAMIKNKCDLGKAYELFCDIPEKNAVSYATMITGFVRAGRFDEAEFLYAETPVKFRDSVASNVLLSGYLRAGKWNEAVRVFQGMAVKEVVSCSSMVHGYCKMGRIVDARSLFDRMTERNVITWTAMIDGYFKAGFFEDGFGLFLRMRQEGDVKVNSNTLAVMFKACRDFVRYREGSQIHGLVSRMPLEFDLFLGNSLMSMYSKLGYMGEAKAVFGVMKNKDSVSWNSLITGLVQRKQISEAYELFEKMPGKDMVSWTDMIKGFSGKGEISKCVELFGMMPEKDNITWTAMISAFVSNGYYEEALCWFHKMLQKEVCPNSYTFSSVLSATASLADLIEGLQIHGRVVKMNIVNDLSVQNSLVSMYCKCGNTNDAYKIFSCISEPNIVSYNTMISGYSYNGFGKKALKLFSMLESSGKEPNGVTFLALLSACVHVGYVDLGWKYFKSMKSSYNIEPGPDHYACMVDLLGRSGLLDDASNLISTMPCKPHSGVWGSLLSASKTHLRVDLAELAAKKLIELEPDSATPYVVLSQLYSIIGKNRDCDRIMNIKKSKRIKKDPGSSWIILKGEVHNFLAGDESQLNLEEIGFTLKMIRKEMELI.

A mitochondrion-targeting transit peptide spans 1 to 47; the sequence is MVMRPISNKGLIYRHNICLRCNSTLAVSNHEPITQKTRNFLETTTTS. PPR repeat units follow at residues 49–79, 80–110, 111–142, 143–173, 176–206, 207–241, 242–272, 274–308, 309–339, 340–374, 375–401, 402–436, 437–471, 472–502, 503–537, 538–568, and 574–604; these read AIFQ…MSNR, SIVS…MPVR, VTTS…IPEK, NAVS…TPVK, DSVA…MAVK, EVVS…NVIT, WTAM…GDVK, NSNT…PLEF, DLFL…MKNK, DSVS…DMVS, WTDM…MPEK, DNIT…EVCP, NSYT…NIVN, DLSV…ISEP, NIVS…GKEP, NGVT…MKSS, and GPDH…MPCK. The type E motif stretch occupies residues 609–684; the sequence is VWGSLLSASK…DPGSSWIILK (76 aa). The interval 685-715 is type E(+) motif; sequence GEVHNFLAGDESQLNLEEIGFTLKMIRKEME.

It belongs to the PPR family. PCMP-E subfamily.

It is found in the mitochondrion. The polypeptide is Pentatricopeptide repeat-containing protein At1g53600, mitochondrial (PCMP-E63) (Arabidopsis thaliana (Mouse-ear cress)).